The sequence spans 130 residues: Holo-[acyl-carrier-protein] synthase (130 aa).

Positions 9 and 58 each coordinate Mg(2+).

It belongs to the P-Pant transferase superfamily. AcpS family. Mg(2+) is required as a cofactor.

The protein resides in the cytoplasm. The catalysed reaction is apo-[ACP] + CoA = holo-[ACP] + adenosine 3',5'-bisphosphate + H(+). In terms of biological role, transfers the 4'-phosphopantetheine moiety from coenzyme A to a Ser of acyl-carrier-protein. This is Holo-[acyl-carrier-protein] synthase from Mycolicibacterium paratuberculosis (strain ATCC BAA-968 / K-10) (Mycobacterium paratuberculosis).